A 414-amino-acid chain; its full sequence is Histidine--tRNA ligase (414 aa).

The protein belongs to the class-II aminoacyl-tRNA synthetase family. As to quaternary structure, homodimer.

The protein resides in the cytoplasm. The enzyme catalyses tRNA(His) + L-histidine + ATP = L-histidyl-tRNA(His) + AMP + diphosphate + H(+). This is Histidine--tRNA ligase from Rickettsia rickettsii (strain Iowa).